The chain runs to 69 residues: Cytochrome c oxidase copper chaperone (69 aa).

Residues Cys-23 and Cys-24 each coordinate Cu cation. The CHCH domain occupies 23 to 65 (CCVCKPEKEERDTCILFNGQDSEKCKEFIEKYKECMKGYGFEV). Short sequence motifs (cx9C motif) lie at residues 26–36 (CKPEKEERDTC) and 47–57 (CKEFIEKYKEC). Intrachain disulfides connect Cys-26-Cys-57 and Cys-36-Cys-47.

This sequence belongs to the COX17 family.

The protein localises to the mitochondrion intermembrane space. Functionally, copper chaperone for cytochrome c oxidase (COX). Binds two copper ions and deliver them to the Cu(A) site of COX. The polypeptide is Cytochrome c oxidase copper chaperone (COX17) (Saccharomyces cerevisiae (strain ATCC 204508 / S288c) (Baker's yeast)).